Reading from the N-terminus, the 1145-residue chain is Protein STU1 (1145 aa).

HEAT repeat units lie at residues 96–134 and 168–206; these read TLPL…EKYV and YVPV…KSDL. Disordered regions lie at residues 226-271, 510-793, and 816-839; these read ELIP…GIDT, LLNK…VVDP, and PEPV…PAAS. Residues 229-239 are compositionally biased toward low complexity; the sequence is PTSSRPETPAA. The segment covering 535 to 545 has biased composition (polar residues); sequence SKSTMGTSKPS. Low complexity-rich tracts occupy residues 580–594, 663–676, and 696–708; these read TTTT…SGAR, ASHA…SPSS, and QSQS…SSPS.

The protein belongs to the CLASP family. As to quaternary structure, interacts with microtubules.

It localises to the cytoplasm. The protein localises to the cytoskeleton. The protein resides in the nucleus. Its subcellular location is the spindle. Microtubule binding protein that promotes the stabilization of dynamic microtubules. Required for mitotic spindle formation. The polypeptide is Protein STU1 (STU1) (Gibberella zeae (strain ATCC MYA-4620 / CBS 123657 / FGSC 9075 / NRRL 31084 / PH-1) (Wheat head blight fungus)).